Reading from the N-terminus, the 438-residue chain is MKGPIVRITPNELHIKDASFYDEIYAGSGRIRNKDERFVKTFSAPHAMVSITDHAYHRVRRGLLGEFFSQRSVIKMEPIINGAIEKLSQRLHEACQTGAVINMDAAFAAMTADVITRHAWGQSGNYLDHGNFNKQWKDAVAGTMASRVLFRHFPYMLHILMAVPLPILLKLDPGVADILKIEGLVRRLSVENVNRGIVEKQEGKTIFDALNNVSVPPEQRTAKHLIDEGHILLLAGTETTAKALSTCLCYLLLAENKNVLLALQSELRQAFPNVSTWPKWTEAQKLPYLTAVINECLRLSHGLSTRLPRTAPKESLQYKQWHIPAATPVSQTAYFVHMDPSIFPDPERFEPERWIRASKEGLHLERYIVSFSKGSRQCLGINMAYAEIFLALTHIMRNFEFQLHDTSVDDVRLFRDRFFGAAQDGSVGVRVLVNEVKY.

Cysteine 378 contacts heme.

Belongs to the cytochrome P450 family. Heme serves as cofactor.

The protein operates within secondary metabolite biosynthesis. In terms of biological role, cytochrome P450 monooxygenase; part of the cla gene cluster that produces clavatol and ortho-quinone methide. The clavatol biosynthesis cluster cla and the terrestric acid cluster tra are both involved in the production of peniphenones and penilactones. The non-reducing PKS claF is responsible for the formation of clavatol from successive condensations of 3 malonyl-CoA units, presumably with a simple acetyl-CoA starter unit, and 2 methylation steps. The esterase claE probably collaborates with claF by catalyzing the hydrolysis of ACP-bound acyl intermediates to free the ACP from stalled intermediates. The clavatol oxidase claD then converts clavatol to hydroxyclavatol. Spontaneous dehydration of hydroxyclavatol leads to the accumulation of the highly active ortho-quinone methide. On the other hand, the PKS-NRPS hybrid traA is involved in the formation of crustosic acid, with the help of traB and traD. The polyketide synthase module (PKS) of traA is responsible for the synthesis of the polyketide backbone via the condensation of an acetyl-CoA starter unit with 3 malonyl-CoA units. The downstream nonribosomal peptide synthetase (NRPS) module then amidates the carboxyl end of the polyketide with L-malic acid. Because traA lacks a designated enoylreductase (ER) domain, the required activity is provided the enoyl reductase traG. Crustosic acid undergoes decarboxylation and isomerization to the terrestric acid, catalyzed by the 2-oxoglutarate-dependent dioxygenase traH. Both acids are further converted to the 2 gamma-butyrolactones (R)-5-methyltetronic acid and (S)-5-carboxylmethyltetronic acid, with involvement of the cytochrome P450 monooxygenase claJ. Spontaneous addition of the methide to these gamma-butyrolactones leads to peniphenone D and penilactone D, which undergo again stereospecific attacking by methide to give penilactones A and B. The protein is Cytochrome P450 monooxygenase claJ of Penicillium crustosum (Blue mold fungus).